The chain runs to 110 residues: Carboxysome shell protein CsoS1B (110 aa).

The BMC domain maps to 8–93; it reads ALGMIETRGL…VHSEVEIILP (86 aa).

This sequence belongs to the bacterial microcompartments protein family. CsoS1 subfamily. As to quaternary structure, homohexamer with a small central pore. Interacts with the N-terminus (residues 1-136) of RuBisCO (CbbL).

It localises to the carboxysome. Its function is as follows. One of shell proteins of the carboxysome, a polyhedral inclusion where RuBisCO (ribulose bisphosphate carboxylase, ccbL-ccbS) is sequestered. Assembles into hexamers which make sheets that form the facets of the polyhedral carboxysome. The shell probably limits the diffusion of CO(2) into and out of the carboxysome. There are estimated to be 540 CsoS1B proteins per carboxysome. Functionally, unlike beta-carboxysomes, alpha-carboxysomes (Cb) can form without cargo protein. CsoS2 is essential for Cb formation and is also capable of targeting foreign proteins to the Cb. The Cb shell assembles with the aid of CsoS2; CsoS1A, CsoS1B and CsoS1C form the majority of the shell while CsoS4A and CsoS4B form vertices. CsoS1D forms pseudohexamers that probably control metabolite flux into and out of the shell. The protein is Carboxysome shell protein CsoS1B of Halothiobacillus neapolitanus (strain ATCC 23641 / c2) (Thiobacillus neapolitanus).